Consider the following 434-residue polypeptide: Ribosomal protein uS12 methylthiotransferase RimO (434 aa).

In terms of domain architecture, MTTase N-terminal spans 6–122 (NRVFLLSLGC…ILTAIGARYR (117 aa)). [4Fe-4S] cluster-binding residues include Cys15, Cys51, Cys85, Cys146, Cys150, and Cys153. The 230-residue stretch at 132–361 (TAPGHTSFLK…MELQEGISEE (230 aa)) folds into the Radical SAM core domain. Positions 364-431 (KRLEGREIAV…PYELFGTVLK (68 aa)) constitute a TRAM domain.

It belongs to the methylthiotransferase family. RimO subfamily. The cofactor is [4Fe-4S] cluster.

It localises to the cytoplasm. The enzyme catalyses L-aspartate(89)-[ribosomal protein uS12]-hydrogen + (sulfur carrier)-SH + AH2 + 2 S-adenosyl-L-methionine = 3-methylsulfanyl-L-aspartate(89)-[ribosomal protein uS12]-hydrogen + (sulfur carrier)-H + 5'-deoxyadenosine + L-methionine + A + S-adenosyl-L-homocysteine + 2 H(+). Its function is as follows. Catalyzes the methylthiolation of an aspartic acid residue of ribosomal protein uS12. The sequence is that of Ribosomal protein uS12 methylthiotransferase RimO from Chlorobium phaeovibrioides (strain DSM 265 / 1930) (Prosthecochloris vibrioformis (strain DSM 265)).